Reading from the N-terminus, the 534-residue chain is uncharacterized protein (534 aa).

A run of 2 helical transmembrane segments spans residues 149 to 169 and 185 to 205; these read ILTT…SITI and VFLV…SLIF.

The protein localises to the cell membrane. This is an uncharacterized protein from Mycoplasma pneumoniae (strain ATCC 29342 / M129 / Subtype 1) (Mycoplasmoides pneumoniae).